A 75-amino-acid chain; its full sequence is Toxin-like peptide AaF1CA7 (75 aa).

The N-terminal stretch at 1–22 (MMKLMLFSIIVILFSLIGSIHG) is a signal peptide. The LCN-type CS-alpha/beta domain occupies 25 to 75 (VPGNYPLDSSDDTYLCAPLGENPSCIQICRKHGVKYGYCYAFQCWCEYFGR). 3 disulfide bridges follow: Cys40–Cys63, Cys49–Cys68, and Cys53–Cys70.

Belongs to the long (3 C-C) scorpion toxin superfamily. In terms of tissue distribution, expressed by the venom gland.

It localises to the secreted. In terms of biological role, probable neurotoxin that inhibits ion channels. In Androctonus australis (Sahara scorpion), this protein is Toxin-like peptide AaF1CA7.